We begin with the raw amino-acid sequence, 136 residues long: 2-hydroxyisobutanoyl-CoA mutase small subunit (136 aa).

The B12-binding domain maps to Pro-5 to Arg-133. His-18 contributes to the adenosylcob(III)alamin binding site.

Belongs to the acyl-CoA mutase small subunit family. As to quaternary structure, homotetramer composed of two large substrate-binding subunits (HcmA) and two small cobalamin-binding subunits (HcmB). The cofactor is adenosylcob(III)alamin.

It catalyses the reaction 2-hydroxyisobutanoyl-CoA = (3S)-3-hydroxybutanoyl-CoA. Together with HcmA, catalyzes the isomerization of 2-hydroxyisobutyryl-CoA and 3-hydroxybutyryl-CoA. Is specific for 2-hydroxyisobutyryl-CoA and (S)-3-hydroxybutyryl-CoA, and shows only very low activity with (R)-3-hydroxybutyryl-CoA, isobutyryl-CoA and butyryl-CoA. In vitro, can isomerize pivalyl-CoA and isovaleryl-CoA, with much lower efficiency. Plays a central role in the degradation of substrates bearing a tert-butyl moiety, such as the fuel oxygenate methyl tert-butyl ether (MTBE) and its metabolites. The chain is 2-hydroxyisobutanoyl-CoA mutase small subunit from Aquincola tertiaricarbonis.